Here is a 501-residue protein sequence, read N- to C-terminus: Glutamyl-tRNA(Gln) amidotransferase subunit A (501 aa).

Catalysis depends on charge relay system residues lysine 80 and serine 155. Catalysis depends on serine 179, which acts as the Acyl-ester intermediate.

This sequence belongs to the amidase family. GatA subfamily. In terms of assembly, heterotrimer of A, B and C subunits.

The enzyme catalyses L-glutamyl-tRNA(Gln) + L-glutamine + ATP + H2O = L-glutaminyl-tRNA(Gln) + L-glutamate + ADP + phosphate + H(+). Allows the formation of correctly charged Gln-tRNA(Gln) through the transamidation of misacylated Glu-tRNA(Gln) in organisms which lack glutaminyl-tRNA synthetase. The reaction takes place in the presence of glutamine and ATP through an activated gamma-phospho-Glu-tRNA(Gln). The chain is Glutamyl-tRNA(Gln) amidotransferase subunit A from Cupriavidus pinatubonensis (strain JMP 134 / LMG 1197) (Cupriavidus necator (strain JMP 134)).